A 647-amino-acid polypeptide reads, in one-letter code: Chaperone protein DnaK (647 aa).

Threonine 198 is subject to Phosphothreonine; by autocatalysis. Basic and acidic residues-rich tracts occupy residues 514–529 (AEAN…ESVD), 540–557 (STEK…DADK), and 600–622 (SQEK…KDDN). Disordered stretches follow at residues 514–557 (AEAN…DADK) and 596–647 (AIYK…EKSA). Acidic residues predominate over residues 623–632 (VVDADFEEVK). The segment covering 633-647 (EESKEGKEEDKEKSA) has biased composition (basic and acidic residues).

The protein belongs to the heat shock protein 70 family.

In terms of biological role, acts as a chaperone. The sequence is that of Chaperone protein DnaK from Pelagibacter ubique (strain HTCC1062).